Consider the following 248-residue polypeptide: Mannose-binding protein C (248 aa).

A signal peptide spans 1–20 (MSLFPSLPLLLLSVVATSYS). Residues 42–99 (GINGFPGKDGRDGTKGEKGEPGQGLRGLQGPPGKLGPPGNPGPSGSPGPKGQKGDPGE) form the Collagen-like domain. Residues 43–111 (INGFPGKDGR…DCDSSLAASE (69 aa)) are disordered. 4-hydroxyproline is present on proline 47. Residues 49-61 (KDGRDGTKGEKGE) are compositionally biased toward basic and acidic residues. A 4-hydroxyproline mark is found at proline 73, proline 79, proline 82, and proline 88. Residues 75–87 (KLGPPGNPGPSGS) show a composition bias toward pro residues. A coiled-coil region spans residues 112–130 (RKALQTEMAHIKKWLTFSL). One can recognise a C-type lectin domain in the interval 134 to 245 (VGNKFFLTNG…CSSSHLALCE (112 aa)). Intrachain disulfides connect cysteine 155–cysteine 244 and cysteine 222–cysteine 236.

In terms of assembly, oligomeric complex of 3 or more homotrimers. Interacts with MASP1 and MASP2. Interacts with MEP1A and MEP1B and may inhibit their catalytic activity. Post-translationally, hydroxylation on proline residues within the sequence motif, GXPG, is most likely to be 4-hydroxy as this fits the requirement for 4-hydroxylation in vertebrates.

It localises to the secreted. Functionally, calcium-dependent lectin involved in innate immune defense. Binds mannose, fucose and N-acetylglucosamine on different microorganisms and activates the lectin complement pathway. Binds to late apoptotic cells, as well as to apoptotic blebs and to necrotic cells, but not to early apoptotic cells, facilitating their uptake by macrophages. This chain is Mannose-binding protein C (MBL2), found in Trachypithecus obscurus (Dusky leaf-monkey).